We begin with the raw amino-acid sequence, 126 residues long: Glycine cleavage system H protein (126 aa).

Residues 22–104 form the Lipoyl-binding domain; the sequence is TVTIGITEYA…YEKAWMVKVE (83 aa). Lys63 carries the post-translational modification N6-lipoyllysine.

It belongs to the GcvH family. As to quaternary structure, the glycine cleavage system is composed of four proteins: P, T, L and H. (R)-lipoate serves as cofactor.

In terms of biological role, the glycine cleavage system catalyzes the degradation of glycine. The H protein shuttles the methylamine group of glycine from the P protein to the T protein. Functionally, is also involved in protein lipoylation via its role as an octanoyl/lipoyl carrier protein intermediate. The chain is Glycine cleavage system H protein from Staphylococcus saprophyticus subsp. saprophyticus (strain ATCC 15305 / DSM 20229 / NCIMB 8711 / NCTC 7292 / S-41).